Reading from the N-terminus, the 258-residue chain is Peptidase inhibitor 15 (258 aa).

The first 21 residues, 1 to 21 (MIMNSAVSLVILLSLLCEAHT), serve as a signal peptide directing secretion. Residues 22 to 60 (VVLLNPTDSSLPANNFTDTEAALSTPLESADIPKARRKR) constitute a propeptide that is removed on maturation. 2 N-linked (GlcNAc...) asparagine glycosylation sites follow: N36 and N124. The region spanning 71–211 (LDYHNQVRGK…RRAVYLVCNY (141 aa)) is the SCP domain.

Belongs to the CRISP family. In terms of processing, N-glycosylated. As to expression, weakly expressed. Expressed at low level in prostate, mammary gland, salivary gland and thyroid gland.

Its subcellular location is the secreted. In terms of biological role, serine protease inhibitor which displays weak inhibitory activity against trypsin. May play a role in facial patterning during embryonic development. The protein is Peptidase inhibitor 15 (Pi15) of Mus musculus (Mouse).